We begin with the raw amino-acid sequence, 378 residues long: Ribosomal RNA large subunit methyltransferase G (378 aa).

It belongs to the methyltransferase superfamily. RlmG family.

Its subcellular location is the cytoplasm. It catalyses the reaction guanosine(1835) in 23S rRNA + S-adenosyl-L-methionine = N(2)-methylguanosine(1835) in 23S rRNA + S-adenosyl-L-homocysteine + H(+). In terms of biological role, specifically methylates the guanine in position 1835 (m2G1835) of 23S rRNA. The chain is Ribosomal RNA large subunit methyltransferase G from Shigella boydii serotype 4 (strain Sb227).